The sequence spans 753 residues: Subtilisin-like protease SBT3.17 (753 aa).

The N-terminal stretch at 1–29 is a signal peptide; that stretch reads MGNSFLIADTSSLVIGLLLILNGVFISAA. Residues 30-116 constitute a propeptide, activation peptide; that stretch reads KHYGLNKIHI…VVPSRVMRLK (87 aa). Residues 38-115 enclose the Inhibitor I9 domain; the sequence is HIVHLGAKQH…RVVPSRVMRL (78 aa). An N-linked (GlcNAc...) asparagine glycan is attached at N97. In terms of domain architecture, Peptidase S8 spans 120 to 603; the sequence is TFDYLGLLPT…GGLINPEKVT (484 aa). D150 (charge relay system) is an active-site residue. Residue N161 is glycosylated (N-linked (GlcNAc...) asparagine). The Charge relay system role is filled by H227. Residue N369 is glycosylated (N-linked (GlcNAc...) asparagine). Catalysis depends on S534, which acts as the Charge relay system. N-linked (GlcNAc...) asparagine glycosylation is found at N639, N704, and N737.

The protein belongs to the peptidase S8 family.

The protein resides in the secreted. This Arabidopsis thaliana (Mouse-ear cress) protein is Subtilisin-like protease SBT3.17.